Consider the following 212-residue polypeptide: Large ribosomal subunit protein uL1 (212 aa).

This sequence belongs to the universal ribosomal protein uL1 family. As to quaternary structure, part of the 50S ribosomal subunit.

In terms of biological role, binds directly to 23S rRNA. Probably involved in E site tRNA release. Its function is as follows. Protein L1 is also a translational repressor protein, it controls the translation of its operon by binding to its mRNA. This chain is Large ribosomal subunit protein uL1, found in Methanosphaera stadtmanae (strain ATCC 43021 / DSM 3091 / JCM 11832 / MCB-3).